Reading from the N-terminus, the 180-residue chain is Insertion element IS1296 uncharacterized 21.4 kDa protein (180 aa).

Belongs to the IS150/IS1296 orfA family.

This Mycoplasma mycoides subsp. mycoides SC protein is Insertion element IS1296 uncharacterized 21.4 kDa protein.